Consider the following 255-residue polypeptide: MKIGVFDSGVGGFSVLKSLLKAQLFDEIIYYGDSARVPYGTKDPTTIKQFGLEALDFFKPHQIKLLIVACNTASALALEEMQKHSKIPIVGVIEPSILAIKQQVKEKNAPILVLGTKATIQSNAYDNALKQQGYLNVSHLATSLFVPLIEESILEGELLETCMRYYFTPLKILPEVIILGCTHFPLIAQKIEGYFMEHFALSTPPLLIHSGDAIVEYLQQKYALKKNAHAFPKVEFHASGDVIWLEKQAKEWLKL.

Residues 7-8 (DS) and 39-40 (YG) contribute to the substrate site. Residue cysteine 70 is the Proton donor/acceptor of the active site. Residue 71-72 (NT) participates in substrate binding. Catalysis depends on cysteine 181, which acts as the Proton donor/acceptor. 182-183 (TH) is a substrate binding site.

This sequence belongs to the aspartate/glutamate racemases family.

It catalyses the reaction L-glutamate = D-glutamate. It functions in the pathway cell wall biogenesis; peptidoglycan biosynthesis. Its function is as follows. Provides the (R)-glutamate required for cell wall biosynthesis. This is Glutamate racemase from Helicobacter pylori (strain G27).